Consider the following 1034-residue polypeptide: Enteropeptidase (1034 aa).

The propeptide occupies 1 to 51 (MGSKRIIPSRHRSLSTYEVMFTALFAILMVLCAGLIAVSWLTIKGSEKDAA). The Cytoplasmic portion of the chain corresponds to 2-18 (GSKRIIPSRHRSLSTYE). A helical; Signal-anchor for type II membrane protein transmembrane segment spans residues 19 to 47 (VMFTALFAILMVLCAGLIAVSWLTIKGSE). The Extracellular segment spans residues 48–1034 (KDAALGKSHE…FTEWIQSFLH (987 aa)). One can recognise an SEA domain in the interval 54–169 (KSHEARGTMK…NSIDITESLE (116 aa)). N-linked (GlcNAc...) asparagine glycans are attached at residues asparagine 116, asparagine 147, asparagine 170, and asparagine 194. The LDL-receptor class A 1 domain maps to 197-238 (IECLPGSRPCADALKCIAVDLFCDGELNCPDGSDEDSKICAT). 4 disulfides stabilise this stretch: cysteine 199–cysteine 212, cysteine 206–cysteine 225, cysteine 219–cysteine 236, and cysteine 240–cysteine 268. One can recognise a CUB 1 domain in the interval 240–349 (CDGKFLLTES…IGFNATYTAF (110 aa)). N-linked (GlcNAc...) asparagine glycans are attached at residues asparagine 283, asparagine 343, asparagine 350, asparagine 403, asparagine 455, asparagine 485, asparagine 518, asparagine 549, and asparagine 645. One can recognise an MAM domain in the interval 357 to 519 (DEKINCNFED…ISLTYGICNV (163 aa)). A disulfide bridge connects residues cysteine 539 and cysteine 567. A CUB 2 domain is found at 539-649 (CGGPFELWEP…GGFKANFTTG (111 aa)). Residues 656 to 694 (EPCKEDNFQCENGECVLLVNLCDGFSHCKDGSDEAHCVR) form the LDL-receptor class A 2 domain. 3 disulfide bridges follow: cysteine 658-cysteine 670, cysteine 665-cysteine 683, and cysteine 677-cysteine 692. Residues 693 to 786 (VRFLNGTANN…LILLQCNHKS (94 aa)) enclose the SRCR domain. Residues asparagine 697, asparagine 701, asparagine 721, asparagine 740, and asparagine 761 are each glycosylated (N-linked (GlcNAc...) asparagine). Disulfide bonds link cysteine 772-cysteine 782, cysteine 787-cysteine 911, cysteine 825-cysteine 841, cysteine 925-cysteine 992, cysteine 956-cysteine 971, and cysteine 982-cysteine 1010. Residues 800 to 1034 (IVGGNDSREG…FTEWIQSFLH (235 aa)) enclose the Peptidase S1 domain. N-linked (GlcNAc...) asparagine glycosylation is present at asparagine 804. The active-site Charge relay system is histidine 840. The N-linked (GlcNAc...) asparagine glycan is linked to asparagine 863. The Charge relay system role is filled by aspartate 891. Asparagine 902 and asparagine 964 each carry an N-linked (GlcNAc...) asparagine glycan. The active-site Charge relay system is the serine 986.

The protein belongs to the peptidase S1 family. In terms of assembly, heterotrimer of a catalytic (light) chain, a multidomain (heavy) chain, and a mini chain. In terms of processing, the chains are derived from a single precursor that is cleaved by a trypsin-like protease. Post-translationally, the mini chain may be cleaved by elastase.

Its subcellular location is the membrane. It catalyses the reaction Activation of trypsinogen by selective cleavage of 6-Lys-|-Ile-7 bond.. Its function is as follows. Responsible for initiating activation of pancreatic proteolytic proenzymes (trypsin, chymotrypsin and carboxypeptidase A). It catalyzes the conversion of trypsinogen to trypsin which in turn activates other proenzymes including chymotrypsinogen, procarboxypeptidases, and proelastases. This is Enteropeptidase (TMPRSS15) from Sus scrofa (Pig).